Reading from the N-terminus, the 1863-residue chain is Transient receptor potential cation channel subfamily M member 7 (1863 aa).

Position 1 is an N-acetylmethionine (Met1). Residues 1-850 are Cytoplasmic-facing; sequence MSQKSWIEST…ITRKFYAFYH (850 aa). Ser101 is modified (phosphoserine). Residues 544 to 555 show a composition bias toward low complexity; it reads NRRSGRNTSSST. The interval 544–574 is disordered; sequence NRRSGRNTSSSTPQLRKSHETFGNRADKKEK. Residues 560–573 are compositionally biased toward basic and acidic residues; it reads KSHETFGNRADKKE. Residues 851-876 traverse the membrane as a helical segment; it reads APIVKFWFNTLAYLGFLMLYTFVVLV. Residues 877-882 are Extracellular-facing; it reads KMEQLP. The helical transmembrane segment at 883-904 threads the bilayer; the sequence is SVQEWIVIAYIFTYAIEKVREV. The Cytoplasmic portion of the chain corresponds to 905–923; that stretch reads FMSEAGKISQKIKVWFSDY. The helical transmembrane segment at 924–943 threads the bilayer; that stretch reads FNVSDTIAIISFFVGFGLRF. At 944 to 956 the chain is on the extracellular side; the sequence is GAKWNYINAYDNH. The helical transmembrane segment at 957 to 980 threads the bilayer; sequence VFVAGRLIYCLNIIFWYVRLLDFL. The Cytoplasmic portion of the chain corresponds to 981–999; that stretch reads AVNQQAGPYVMMIGKMVAN. Residues 1000-1023 traverse the membrane as a helical segment; the sequence is MFYIVVIMALVLLSFGVPRKAILY. The Extracellular segment spans residues 1024–1025; sequence PH. The pore-forming intramembrane region spans 1026–1066; that stretch reads EEPSWSLAKDIVFHPYWMIFGEVYAYEIDVCANDSTLPTIC. The Extracellular portion of the chain corresponds to 1067 to 1069; sequence GPG. The helical transmembrane segment at 1070–1098 threads the bilayer; sequence TWLTPFLQAVYLFVQYIIMVNLLIAFFNN. Residues 1099 to 1863 are Cytoplasmic-facing; the sequence is VYLQVKAISN…EATNSVRLML (765 aa). Residues Cys1143, Cys1144, and Cys1146 are each lipidated (S-palmitoyl cysteine). Residue Thr1163 is modified to Phosphothreonine. Ser1191, Ser1193, Ser1224, Ser1255, and Ser1258 each carry phosphoserine. Residues 1198 to 1250 adopt a coiled-coil conformation; that stretch reads RVTFERVEQMSIQIKEVGDRVNYIKRSLQSLDSQIGHLQDLSALTVDTLKTLT. Thr1265 carries the phosphothreonine modification. A phosphoserine mark is found at Ser1300, Ser1357, Ser1360, Ser1385, Ser1386, Ser1389, Ser1394, Ser1395, and Ser1403. Positions 1380 to 1418 are disordered; it reads NQKLGSSPNSSPHMSSPPTKFSVSTPSQPSCKSHLESTT. Residues 1385 to 1397 show a composition bias toward low complexity; it reads SSPNSSPHMSSPP. Residues 1398 to 1410 show a composition bias toward polar residues; that stretch reads TKFSVSTPSQPSC. Phosphothreonine is present on Thr1404. A phosphoserine mark is found at Ser1406 and Ser1445. Thr1454 is modified (phosphothreonine). Ser1455 is modified (phosphoserine). Thr1466 and Thr1470 each carry phosphothreonine. Phosphoserine is present on residues Ser1491, Ser1498, Ser1502, Ser1511, Ser1525, and Ser1531. The disordered stretch occupies residues 1498 to 1539; that stretch reads SRRASTEDSPEVDSKAALLPDWLRDRPSNREMPSEGGTLNGL. Residues 1519–1530 show a composition bias toward basic and acidic residues; it reads WLRDRPSNREMP. Phosphothreonine is present on Thr1535. The residue at position 1541 (Ser1541) is a Phosphoserine. Thr1549 carries the post-translational modification Phosphothreonine. A phosphoserine mark is found at Ser1565 and Ser1567. A Phosphothreonine modification is found at Thr1581. An Alpha-type protein kinase domain is found at 1592-1822; that stretch reads ILNNSMSSWS…CCRKLKLPDL (231 aa). Phosphoserine occurs at positions 1596 and 1613. Positions 1619, 1620, 1621, 1622, and 1646 each coordinate ADP. At Ser1658 the chain carries Phosphoserine. A Phosphothreonine modification is found at Thr1683. ADP contacts are provided by Glu1718, Glu1719, and Met1721. Residue His1751 participates in Zn(2+) binding. The active-site Proton acceptor is the Asp1765. Asp1775 contributes to the ADP binding site. Ser1777 bears the Phosphoserine mark. Residues His1808, Cys1810, and Cys1814 each contribute to the Zn(2+) site. Residue Thr1828 is modified to Phosphothreonine. The segment at 1838–1863 is disordered; that stretch reads ESSDLNLQSGNSTKESEATNSVRLML. Residues 1841 to 1863 are compositionally biased toward polar residues; the sequence is DLNLQSGNSTKESEATNSVRLML. Ser1846, Ser1849, and Ser1858 each carry phosphoserine.

The protein in the C-terminal section; belongs to the protein kinase superfamily. Alpha-type protein kinase family. ALPK subfamily. In the N-terminal section; belongs to the transient receptor (TC 1.A.4) family. LTrpC subfamily. TRPM7 sub-subfamily. Homodimer. Homotetramer. Forms heteromers with TRPM6; heteromeric channels are functionally different from the homomeric channels. Interacts with PLCB1. Zn(2+) is required as a cofactor. Post-translationally, palmitoylated; palmitoylation at Cys-1143, Cys-1144 and Cys-1146 promotes TRPM7 trafficking from the Golgi to the surface membrane. Autophosphorylated; autophosphorylation regulates TRPM7 kinase activity towards its substrates. In terms of processing, the C-terminal kinase domain can be cleaved from the channel segment in a cell-type-specific fashion. TRPM7 is cleaved by caspase-8, dissociating the kinase from the ion-conducting pore. The cleaved kinase fragments (M7CKs) can translocate to the cell nucleus and binds chromatin-remodeling complex proteins in a Zn(2+)-dependent manner to ultimately phosphorylate specific Ser/Thr residues of histones. Found to be expressed in brain and skeletal muscle, with stronger signals in kidney, heart, liver and spleen.

It is found in the cell membrane. The protein resides in the cytoplasmic vesicle membrane. It localises to the nucleus. The catalysed reaction is L-seryl-[protein] + ATP = O-phospho-L-seryl-[protein] + ADP + H(+). It carries out the reaction L-threonyl-[protein] + ATP = O-phospho-L-threonyl-[protein] + ADP + H(+). It catalyses the reaction Mg(2+)(in) = Mg(2+)(out). The enzyme catalyses Ca(2+)(in) = Ca(2+)(out). The catalysed reaction is Zn(2+)(in) = Zn(2+)(out). Channel displays constitutive activity. Channel activity is negatively regulated by cytosolic Mg(2+), Mg-ATP and low intracellular pH. Resting free cytosolic Mg(2+) and Mg-ATP concentrations seem to be sufficient to block native TRPM7 channel activity. TRPM7 channel activity is highly dependent on membrane levels of phosphatidylinositol 4,5 bisphosphate (PIP2). PIP2 hydrolysis negatively regulates TRPM7 channel activity. TRPM7 kinase activity does not affect channel activity. The kinase activity is controlled through the autophosphorylation of a serine/threonine-rich region located N-terminal to the catalytic domain. Bifunctional protein that combines an ion channel with an intrinsic kinase domain, enabling it to modulate cellular functions either by conducting ions through the pore or by phosphorylating downstream proteins via its kinase domain. The channel is highly permeable to divalent cations, specifically calcium (Ca2+), magnesium (Mg2+) and zinc (Zn2+) and mediates their influx. Controls a wide range of biological processes such as Ca2(+), Mg(2+) and Zn(2+) homeostasis, vesicular Zn(2+) release channel and intracellular Ca(2+) signaling, embryonic development, immune responses, cell motility, proliferation and differentiation. The C-terminal alpha-kinase domain autophosphorylates cytoplasmic residues of TRPM7. TRPM7 phosphorylates SMAD2, suggesting that TRPM7 kinase may play a role in activating SMAD signaling pathways. In vitro, TRPM7 kinase phosphorylates ANXA1 (annexin A1), myosin II isoforms and a variety of proteins with diverse cellular functions. In terms of biological role, the cleaved channel exhibits substantially higher current and potentiates Fas receptor signaling. Its function is as follows. The C-terminal kinase domain can be cleaved from the channel segment in a cell-type-specific fashion. In immune cells, the TRPM7 kinase domain is clipped from the channel domain by caspases in response to Fas-receptor stimulation. The cleaved kinase fragments can translocate to the nucleus, and bind chromatin-remodeling complex proteins in a Zn(2+)-dependent manner to ultimately phosphorylate specific Ser/Thr residues of histones known to be functionally important for cell differentiation and embryonic development. The chain is Transient receptor potential cation channel subfamily M member 7 (Trpm7) from Mus musculus (Mouse).